The primary structure comprises 270 residues: Chymotrypsin-like elastase family member 3A (270 aa).

The or 16 signal peptide spans Met1 to Ala15. Residues Ser16–Arg28 constitute a propeptide, activation peptide. A Peptidase S1 domain is found at Val29–Ala268. Cys58 and Cys74 are joined by a disulfide. His73 functions as the Charge relay system in the catalytic mechanism. N-linked (GlcNAc...) asparagine glycosylation is present at Asn114. A disulfide bridge links Cys117 with Cys120. Asp123 acts as the Charge relay system in catalysis. 3 disulfides stabilise this stretch: Cys157–Cys223, Cys188–Cys204, and Cys213–Cys244. Residue Ser217 is the Charge relay system of the active site.

Belongs to the peptidase S1 family. Elastase subfamily.

It catalyses the reaction Preferential cleavage: Ala-|-Xaa. Does not hydrolyze elastin.. Functionally, efficient protease with alanine specificity but only little elastolytic activity. This chain is Chymotrypsin-like elastase family member 3A (CELA3A), found in Homo sapiens (Human).